Here is a 180-residue protein sequence, read N- to C-terminus: Ribulose bisphosphate carboxylase small subunit, chloroplastic 2 (180 aa).

The transit peptide at 1 to 56 directs the protein to the chloroplast; the sequence is MASSVLSSAAVATVSRTPAQASMVAPFTGLKSTVGFPATKKNDDITSLASNGGRVQ.

This sequence belongs to the RuBisCO small chain family. Heterohexadecamer of 8 large and 8 small subunits.

It localises to the plastid. Its subcellular location is the chloroplast. Functionally, ruBisCO catalyzes two reactions: the carboxylation of D-ribulose 1,5-bisphosphate, the primary event in carbon dioxide fixation, as well as the oxidative fragmentation of the pentose substrate. Both reactions occur simultaneously and in competition at the same active site. Although the small subunit is not catalytic it is essential for maximal activity. This Spinacia oleracea (Spinach) protein is Ribulose bisphosphate carboxylase small subunit, chloroplastic 2.